A 636-amino-acid chain; its full sequence is Probable cyclin-dependent serine/threonine-protein kinase DDB_G0278487 (636 aa).

The disordered stretch occupies residues 1–41 (MPSQSNNVITSSTASSSMSSSSNSSDASSTSSSNTNNAHSS). Residues 64–343 (YEIISKIGEG…AEQALQSPFF (280 aa)) enclose the Protein kinase domain. ATP-binding positions include 70-78 (IGEGISGSV) and Lys-93. Asp-184 serves as the catalytic Proton acceptor. Disordered stretches follow at residues 378–408 (EQQK…QKKQ), 473–506 (KRQQ…NNSY), 527–555 (SETE…DEED), and 579–636 (NNQQ…LTIH). Over residues 473-485 (KRQQQEHEQRLQR) the composition is skewed to basic and acidic residues. A compositionally biased stretch (low complexity) spans 486–499 (EQQQQLNQLQQQKE). The segment covering 529–555 (TESEYESDEEDFYTEEEVEDYSSDEED) has biased composition (acidic residues). 2 stretches are compositionally biased toward low complexity: residues 579-594 (NNQQ…QQQQ) and 617-628 (NNNNGNNNNNNN).

The protein belongs to the protein kinase superfamily. CMGC Ser/Thr protein kinase family. CDC2/CDKX subfamily.

The enzyme catalyses L-seryl-[protein] + ATP = O-phospho-L-seryl-[protein] + ADP + H(+). It catalyses the reaction L-threonyl-[protein] + ATP = O-phospho-L-threonyl-[protein] + ADP + H(+). This is Probable cyclin-dependent serine/threonine-protein kinase DDB_G0278487 from Dictyostelium discoideum (Social amoeba).